The following is a 188-amino-acid chain: Epididymal-specific lipocalin-5 (188 aa).

The first 19 residues, 1–19, serve as a signal peptide directing secretion; it reads MENIMPFALLGLCVGLAAG. A disulfide bridge links Cys-82 with Cys-176.

This sequence belongs to the calycin superfamily. Lipocalin family. There are two similar, immunologically cross-reacting forms of this protein, designated B and C, which probably result from different processing of the amino end. In terms of processing, the N-terminus of form C is probably blocked. In terms of tissue distribution, synthesized exclusively in the proximal part (caput epididymidis) of the epididymis. It makes up a substantial part of the total protein in the epididymal luminal fluid and binds to the sperm membrane.

Its subcellular location is the secreted. Associates with spermatozoa in the epididymal fluid but does not bind tightly to them. Binds both all-trans and 9-cis retinoic acid. May act as a retinoid carrier protein which is required for epididymal function and/or sperm maturation. The chain is Epididymal-specific lipocalin-5 (Lcn5) from Rattus norvegicus (Rat).